Here is a 453-residue protein sequence, read N- to C-terminus: Tol-Pal system protein TolB (453 aa).

The signal sequence occupies residues Met-1–Ala-39.

The protein belongs to the TolB family. In terms of assembly, the Tol-Pal system is composed of five core proteins: the inner membrane proteins TolA, TolQ and TolR, the periplasmic protein TolB and the outer membrane protein Pal. They form a network linking the inner and outer membranes and the peptidoglycan layer.

It localises to the periplasm. In terms of biological role, part of the Tol-Pal system, which plays a role in outer membrane invagination during cell division and is important for maintaining outer membrane integrity. The chain is Tol-Pal system protein TolB from Gluconobacter oxydans (strain 621H) (Gluconobacter suboxydans).